Here is a 632-residue protein sequence, read N- to C-terminus: Sporulenol synthase (632 aa).

Residue Asp377 is the Proton donor of the active site. 3 PFTB repeats span residues 395–436 (WERG…EDAA), 465–505 (IQRA…HACG), and 513–554 (IQKA…VQTA).

The protein belongs to the terpene cyclase/mutase family.

It localises to the cell membrane. The catalysed reaction is sporulenol = (R)-tetraprenyl-beta-curcumene + H2O. It functions in the pathway secondary metabolite biosynthesis; hopanoid biosynthesis. Functionally, catalyzes the cyclization of tetraprenyl beta-curcumene into sporulenol. The polypeptide is Sporulenol synthase (sqhC) (Bacillus subtilis (strain 168)).